We begin with the raw amino-acid sequence, 588 residues long: MARGGAGAEEASLRSNALSWLACGLLALLANAWIILSISAKQQKHKPLELLLCFLAGTHILMAAVPLTTFAVVQLRRQASSDYDWNESICKVFVSTYYTLALATCFTVASLSYHRMWMVRWPVNYRLSNAKKQALHAVMGIWMVSFILSTLPSIGWHNNGERYYARGCQFIVSKIGLGFGVCFSLLLLGGIVMGLVCVAITFYQTLWARPRRARQARRVGGGGGTKAGGPGALGTRPAFEVPAIVVEDARGKRRSSLDGSESAKTSLQVTNLVSAIVFLYDSLTGVPILVVSFFSLKSDSAPPWMVLAVLWCSMAQTLLLPSFIWSCERYRADVRTVWEQCVAIMSEEDGDDDGGCDDYAEGRVCKVRFDANGATGPGSRDPAQVKLLPGRHMLFPPLERVHYLQVPLSRRLSHDETNIFSTPREPGSFLHKWSSSDDIRVLPAQSRALGGPPEYLGQRHRLEDEEDEEEAEGGGLASLRQFLESGVLGSGGGPPRGPGFFREEITTFIDETPLPSPTASPGHSPRRPRPLGLSPRRLSLGSPESRAVGLPLGLSAGRRCSLTGGEESARAWGGSWGPGNPIFPQLTL.

At 1 to 17 (MARGGAGAEEASLRSNA) the chain is on the extracellular side. A helical membrane pass occupies residues 18–38 (LSWLACGLLALLANAWIILSI). The Cytoplasmic portion of the chain corresponds to 39 to 49 (SAKQQKHKPLE). Residues 50 to 70 (LLLCFLAGTHILMAAVPLTTF) form a helical membrane-spanning segment. The Extracellular segment spans residues 71–91 (AVVQLRRQASSDYDWNESICK). Asparagine 86 carries N-linked (GlcNAc...) asparagine glycosylation. A helical membrane pass occupies residues 92–112 (VFVSTYYTLALATCFTVASLS). Topologically, residues 113-133 (YHRMWMVRWPVNYRLSNAKKQ) are cytoplasmic. The helical transmembrane segment at 134-154 (ALHAVMGIWMVSFILSTLPSI) threads the bilayer. Residues 155–174 (GWHNNGERYYARGCQFIVSK) are Extracellular-facing. A helical membrane pass occupies residues 175–195 (IGLGFGVCFSLLLLGGIVMGL). The Cytoplasmic portion of the chain corresponds to 196-275 (VCVAITFYQT…SLQVTNLVSA (80 aa)). A helical membrane pass occupies residues 276–296 (IVFLYDSLTGVPILVVSFFSL). Residues 297–303 (KSDSAPP) are Extracellular-facing. The helical transmembrane segment at 304-324 (WMVLAVLWCSMAQTLLLPSFI) threads the bilayer. Over 325–588 (WSCERYRADV…GNPIFPQLTL (264 aa)) the chain is Cytoplasmic. Phosphoserine is present on residues serine 413 and serine 435. Disordered stretches follow at residues 445–474 (QSRA…AEGG) and 511–550 (ETPL…AVGL). Residues 530–546 (PLGLSPRRLSLGSPESR) are compositionally biased toward low complexity.

This sequence belongs to the G-protein coupled receptor 1 family.

It is found in the cell membrane. In terms of biological role, orphan receptor. The chain is Probable G-protein coupled receptor 162 (GPR162) from Homo sapiens (Human).